The sequence spans 1513 residues: DNA-directed RNA polymerase subunit beta'' (1513 aa).

Residues cysteine 220, cysteine 296, cysteine 303, and cysteine 306 each coordinate Zn(2+). The segment at 644–769 is disordered; that stretch reads RTREKDSENE…EYGNPEEDSV (126 aa). The segment covering 659–679 has biased composition (basic and acidic residues); sequence NEYRTREEECKTLEDEYRTRE. Acidic residues predominate over residues 680-707; the sequence is EEYETLEDEYGIPENEYETLEDEYGILE. The segment covering 726–737 has biased composition (basic and acidic residues); sequence NKYRPREDKYGT. The segment covering 738 to 767 has biased composition (acidic residues); that stretch reads LEEDSEDEHGTLEEDSEEDSEDEYGNPEED.

This sequence belongs to the RNA polymerase beta' chain family. RpoC2 subfamily. In terms of assembly, in plastids the minimal PEP RNA polymerase catalytic core is composed of four subunits: alpha, beta, beta', and beta''. When a (nuclear-encoded) sigma factor is associated with the core the holoenzyme is formed, which can initiate transcription. Requires Zn(2+) as cofactor.

The protein localises to the plastid. It is found in the chloroplast. The enzyme catalyses RNA(n) + a ribonucleoside 5'-triphosphate = RNA(n+1) + diphosphate. In terms of biological role, DNA-dependent RNA polymerase catalyzes the transcription of DNA into RNA using the four ribonucleoside triphosphates as substrates. The protein is DNA-directed RNA polymerase subunit beta'' of Oryza sativa (Rice).